We begin with the raw amino-acid sequence, 212 residues long: uncharacterized protein (212 aa).

The segment covering 87–105 (NNNNNNNNNNNHNHNNSNN) has biased composition (low complexity). Residues 87 to 107 (NNNNNNNNNNNHNHNNSNNTA) form a disordered region.

This is an uncharacterized protein from Saccharomyces cerevisiae (strain ATCC 204508 / S288c) (Baker's yeast).